Consider the following 164-residue polypeptide: Phosphopantetheine adenylyltransferase (164 aa).

Residue S9 participates in substrate binding. ATP-binding positions include S9–F10 and H17. Substrate is bound by residues K41, V78, and R92. Residues G93 to R95, E103, and V128 to T134 contribute to the ATP site.

Belongs to the bacterial CoaD family. In terms of assembly, homohexamer. Mg(2+) serves as cofactor.

It is found in the cytoplasm. It carries out the reaction (R)-4'-phosphopantetheine + ATP + H(+) = 3'-dephospho-CoA + diphosphate. The protein operates within cofactor biosynthesis; coenzyme A biosynthesis; CoA from (R)-pantothenate: step 4/5. Its function is as follows. Reversibly transfers an adenylyl group from ATP to 4'-phosphopantetheine, yielding dephospho-CoA (dPCoA) and pyrophosphate. This is Phosphopantetheine adenylyltransferase from Brucella abortus (strain 2308).